A 240-amino-acid chain; its full sequence is tRNA (guanine-N(1)-)-methyltransferase (240 aa).

S-adenosyl-L-methionine-binding positions include Gly108 and 127–132 (IGDYVL).

The protein belongs to the RNA methyltransferase TrmD family. As to quaternary structure, homodimer.

Its subcellular location is the cytoplasm. The catalysed reaction is guanosine(37) in tRNA + S-adenosyl-L-methionine = N(1)-methylguanosine(37) in tRNA + S-adenosyl-L-homocysteine + H(+). Specifically methylates guanosine-37 in various tRNAs. In Lactobacillus johnsonii (strain CNCM I-12250 / La1 / NCC 533), this protein is tRNA (guanine-N(1)-)-methyltransferase.